The sequence spans 398 residues: Minor cardiolipin synthase ClsB (398 aa).

Residues 3–23 form a helical membrane-spanning segment; it reads VFIVIMIIVVIFFALILLDIF. 2 PLD phosphodiesterase domains span residues 141 to 168 and 311 to 338; these read MQKRNHRKITVIDGKIGYIGGFNIAEEY and YQGFYHVKALIIDDHLSIIGTANFDKRS.

This sequence belongs to the phospholipase D family. Cardiolipin synthase subfamily.

It is found in the cell membrane. Functionally, involved in the biosynthesis of cardiolipin. This is Minor cardiolipin synthase ClsB (clsB) from Bacillus subtilis (strain 168).